A 452-amino-acid polypeptide reads, in one-letter code: Pup--protein ligase (452 aa).

Residue Glu-9 participates in Mg(2+) binding. Position 53 (Arg-53) interacts with ATP. Tyr-55 is a binding site for Mg(2+). The active-site Proton acceptor is the Asp-57. Position 63 (Glu-63) interacts with Mg(2+). Residues Thr-66 and Trp-419 each coordinate ATP.

It belongs to the Pup ligase/Pup deamidase family. Pup-conjugating enzyme subfamily.

It carries out the reaction ATP + [prokaryotic ubiquitin-like protein]-L-glutamate + [protein]-L-lysine = ADP + phosphate + N(6)-([prokaryotic ubiquitin-like protein]-gamma-L-glutamyl)-[protein]-L-lysine.. It participates in protein degradation; proteasomal Pup-dependent pathway. Its pathway is protein modification; protein pupylation. Its function is as follows. Catalyzes the covalent attachment of the prokaryotic ubiquitin-like protein modifier Pup to the proteasomal substrate proteins, thereby targeting them for proteasomal degradation. This tagging system is termed pupylation. The ligation reaction involves the side-chain carboxylate of the C-terminal glutamate of Pup and the side-chain amino group of a substrate lysine. The protein is Pup--protein ligase of Nocardia farcinica (strain IFM 10152).